The primary structure comprises 427 residues: tRNA pseudouridine synthase Pus10 (427 aa).

The active-site Nucleophile is Asp240. Residues Tyr306 and Tyr378 each contribute to the substrate site.

This sequence belongs to the pseudouridine synthase Pus10 family.

The enzyme catalyses uridine(54) in tRNA = pseudouridine(54) in tRNA. It carries out the reaction uridine(55) in tRNA = pseudouridine(55) in tRNA. Its function is as follows. Responsible for synthesis of pseudouridine from uracil-54 and uracil-55 in the psi GC loop of transfer RNAs. In Halorubrum lacusprofundi (strain ATCC 49239 / DSM 5036 / JCM 8891 / ACAM 34), this protein is tRNA pseudouridine synthase Pus10.